Reading from the N-terminus, the 445-residue chain is E3 ubiquitin-protein ligase MYLIP (445 aa).

Positions 1–279 (MLCYVTRPDA…ETHAFYRCDT (279 aa)) constitute an FERM domain. A disordered region spans residues 341–363 (RNDQSPPSSPLKSSDSSMSCSSC). Low complexity predominate over residues 350-363 (PLKSSDSSMSCSSC). Fe cation is bound by residues Cys360, Cys363, and Cys368. An RING-type zinc finger spans residues 387 to 422 (CMVCCEEEINSTFCPCGHTVCCESCAAQLQSCPVCR). The segment at 431 to 433 (VYL) is critical for homodimerization.

Homodimer. Interacts with the E2 ubiquitin-conjugating enzyme, UBE2D1 (via RING-type zinc finger). Interacts with myosin regulatory light chain (MRLC) and TMEM4. In terms of processing, autoubiquitinated. Expressed in developing and adult brain, hippocampus, cerebellum, cerebral cortex, thalamus and substantia nigra. Predominantly found in neurons.

It localises to the cytoplasm. Its subcellular location is the cell membrane. The catalysed reaction is S-ubiquitinyl-[E2 ubiquitin-conjugating enzyme]-L-cysteine + [acceptor protein]-L-lysine = [E2 ubiquitin-conjugating enzyme]-L-cysteine + N(6)-ubiquitinyl-[acceptor protein]-L-lysine.. Its pathway is protein modification; protein ubiquitination. With respect to regulation, can bind 1 iron ion per dimer. Iron binding seems to decrease LDLR degradation activity. Functionally, E3 ubiquitin-protein ligase that mediates ubiquitination and subsequent proteasomal degradation of myosin regulatory light chain (MRLC), LDLR, VLDLR and LRP8. Activity depends on E2 enzymes of the UBE2D family. Proteasomal degradation of MRLC leads to inhibit neurite outgrowth in presence of NGF by counteracting the stabilization of MRLC by saposin-like protein (CNPY2/MSAP) and reducing CNPY2-stimulated neurite outgrowth. Acts as a sterol-dependent inhibitor of cellular cholesterol uptake by mediating ubiquitination and subsequent degradation of LDLR. The protein is E3 ubiquitin-protein ligase MYLIP (Mylip) of Rattus norvegicus (Rat).